The chain runs to 384 residues: MTEGVGLPLWLLAELTYRCLLQCPYCSNPLDYAQHKNELTTQEWFDVFDQARQMGAVQLGFSGGEPLVRQDLEQLVAHAHQLGFYTNLVTSGMGLTEQRISHLKQAGLDHIQISFQASDPVLNDALAGSKHAFEQKYEMCRLVKKYDYPMVLNFVIHRHNIDQIDKIIELCLELNADTVELAICQFYGWAFLNRQGLLPTQEQLIRAERITNEYREKLKAQNHPCKLIFVVPDYYEERPKACMNGWGKIFFTVAPDGMALPCHAARQLPISFPNVREQSLSRIWYESTGFNRFRGDAWMPEGCRSCPDKDRDFGGCRCQAYMLTGDASNADPVCGKSPYHQFIEQARAESEIDSSLEKLVFRNSRNSKQFTVQQNIPVQNIVDD.

Residues 5–220 enclose the Radical SAM core domain; the sequence is VGLPLWLLAE…TNEYREKLKA (216 aa). Cysteine 19, cysteine 23, and cysteine 26 together coordinate [4Fe-4S] cluster.

It belongs to the radical SAM superfamily. PqqE family. In terms of assembly, interacts with PqqD. The interaction is necessary for activity of PqqE. The cofactor is [4Fe-4S] cluster.

It carries out the reaction [PQQ precursor protein] + S-adenosyl-L-methionine = E-Y cross-linked-[PQQ precursor protein] + 5'-deoxyadenosine + L-methionine + H(+). It participates in cofactor biosynthesis; pyrroloquinoline quinone biosynthesis. In terms of biological role, catalyzes the cross-linking of a glutamate residue and a tyrosine residue in the PqqA protein as part of the biosynthesis of pyrroloquinoline quinone (PQQ). In Acinetobacter baumannii (strain SDF), this protein is PqqA peptide cyclase.